A 204-amino-acid polypeptide reads, in one-letter code: Holliday junction resolvase RecU (204 aa).

Positions 1–24 are disordered; it reads MTIHYPNGQQPVQHYNTHNELPTP. The span at 7–24 shows a compositional bias: polar residues; the sequence is NGQQPVQHYNTHNELPTP. Residues Thr-87, Asp-89, Asp-102, and Gln-121 each coordinate Mg(2+).

The protein belongs to the RecU family. It depends on Mg(2+) as a cofactor.

Its subcellular location is the cytoplasm. The catalysed reaction is Endonucleolytic cleavage at a junction such as a reciprocal single-stranded crossover between two homologous DNA duplexes (Holliday junction).. In terms of biological role, endonuclease that resolves Holliday junction intermediates in genetic recombination. Cleaves mobile four-strand junctions by introducing symmetrical nicks in paired strands. Promotes annealing of linear ssDNA with homologous dsDNA. Required for DNA repair, homologous recombination and chromosome segregation. The polypeptide is Holliday junction resolvase RecU (Limosilactobacillus reuteri (strain DSM 20016) (Lactobacillus reuteri)).